The primary structure comprises 877 residues: Clumping factor B (877 aa).

The signal sequence occupies residues 1 to 44 (MKKRIDYLSNKQNKYSIRRFTVGTTSVIVGATILFGIGNHQAQA). The short motif at 15–26 (YSIRRFTVGTTS) is the YSIRK-G/S signaling motif element. Polar residues-rich tracts occupy residues 44–61 (ASEQ…NASA) and 68–95 (MIET…NVDS). Residues 44–192 (ASEQSNDTTQ…QGTSKPSVRT (149 aa)) are disordered. Residues 45–542 (SEQSNDTTQS…GSADGDSAVN (498 aa)) form a ligand binding A region region. Residues 96 to 119 (TTKPMSTQTSNTTTTEPASTNETP) are compositionally biased toward low complexity. The span at 120 to 189 (QPTAIKNQAT…SNAQGTSKPS (70 aa)) shows a compositional bias: polar residues. The MIDAS-like motif signature appears at 272 to 276 (DYSNS). Residues 530-849 (YGGGSADGDS…ETGDKSENTN (320 aa)) are disordered. A compositionally biased stretch (pro residues) spans 545-555 (DPTPGPPVDPE). Over residues 556 to 801 (PSPDPEPEPT…SDSDSDSDSD (246 aa)) the composition is skewed to acidic residues. A compositionally biased stretch (polar residues) spans 805 to 816 (RVTPPNNEQKAP). Basic and acidic residues predominate over residues 833-846 (HKTDALPETGDKSE). The short motif at 838–842 (LPETG) is the LPXTG sorting signal element. Residue threonine 841 is modified to Pentaglycyl murein peptidoglycan amidated threonine. Residues 842-877 (GDKSENTNATLFGAMMALLGSLLLFRKRKQDHKEKA) constitute a propeptide, removed by sortase.

This sequence belongs to the serine-aspartate repeat-containing protein (SDr) family. In terms of processing, proteolytically cleaved by aureolysin (aur). This cleavage leads to the inactivation of ClfB.

It localises to the secreted. Its subcellular location is the cell wall. In terms of biological role, cell surface-associated protein implicated in virulence by promoting bacterial attachment to both alpha- and beta-chains of human fibrinogen and inducing the formation of bacterial clumps. Partly responsible for mediating bacterial attachment to the highly keratinized squamous epithelial cells from the nasal cavity via an interaction with cytokeratin K10 (K10). Also promotes bacterial attachment to cultured keratinocytes, possibly through an interaction with cytokeratin K10. Binds mouse cytokeratin K10. Activates human platelet aggregation. This chain is Clumping factor B (clfB), found in Staphylococcus aureus (strain NCTC 8325 / PS 47).